A 248-amino-acid polypeptide reads, in one-letter code: Ras-like protein family member 11B (248 aa).

Positions 29 to 246 (AGRRLVKIAV…ALSAKVRTVT (218 aa)) are small GTPase-like. GTP contacts are provided by residues 40–47 (GASGVGKT), 87–91 (DTPGI), and 152–155 (NKAD). Positions 205–229 (QQPSGTPEKRRTSLIPRPKSPNMQD) are disordered.

Belongs to the small GTPase superfamily. Ras family.

It catalyses the reaction GTP + H2O = GDP + phosphate + H(+). In Bos taurus (Bovine), this protein is Ras-like protein family member 11B.